A 693-amino-acid chain; its full sequence is Sodium-dependent phosphate transport protein 2B (693 aa).

Residues Met1 to Lys46 form a disordered region. The Cytoplasmic segment spans residues Met1–Lys89. The span at Tyr17–Thr40 shows a compositional bias: basic and acidic residues. A helical membrane pass occupies residues Ile90–Phe110. Topologically, residues Val111–Asn135 are extracellular. The chain crosses the membrane as a helical span at residues Asn136–Val156. Topologically, residues Gln157–Ala212 are cytoplasmic. Residues Phe213–Leu233 traverse the membrane as a helical segment. Topologically, residues Glu234–Ala361 are extracellular. A disulfide bridge links Cys302 with Cys349. Residues Asn307 and Asn320 are each glycosylated (N-linked (GlcNAc...) asparagine). Residues Ile362 to Ile382 form a helical membrane-spanning segment. At Val383–Tyr408 the chain is on the cytoplasmic side. A helical membrane pass occupies residues Pro409–Val429. Over Gln430–Gln485 the chain is Extracellular. The chain crosses the membrane as a helical span at residues Ile486–Phe506. The Cytoplasmic portion of the chain corresponds to Thr507–Arg525. The chain crosses the membrane as a helical span at residues Trp526–Leu546. Residues Ser547–Gly550 lie on the Extracellular side of the membrane. The chain crosses the membrane as a helical span at residues Trp551–Leu571. Over Lys572–Leu693 the chain is Cytoplasmic.

Belongs to the SLC34A transporter family. Post-translationally, glycosylated.

It localises to the apical cell membrane. The enzyme catalyses 3 Na(+)(out) + phosphate(out) = 3 Na(+)(in) + phosphate(in). Involved in actively transporting phosphate into cells via Na(+) cotransport. This chain is Sodium-dependent phosphate transport protein 2B (SLC34A2), found in Bos taurus (Bovine).